Reading from the N-terminus, the 196-residue chain is Probable malonic semialdehyde reductase RutE (196 aa).

The protein belongs to the nitroreductase family. HadB/RutE subfamily. FMN serves as cofactor.

It catalyses the reaction 3-hydroxypropanoate + NADP(+) = 3-oxopropanoate + NADPH + H(+). Its function is as follows. May reduce toxic product malonic semialdehyde to 3-hydroxypropionic acid, which is excreted. The chain is Probable malonic semialdehyde reductase RutE from Escherichia coli O45:K1 (strain S88 / ExPEC).